The chain runs to 186 residues: Shikimate kinase (186 aa).

15–20 (GAGKTT) serves as a coordination point for ATP. T19 serves as a coordination point for Mg(2+). Positions 37, 61, and 83 each coordinate substrate. R121 is a binding site for ATP. Residue R140 coordinates substrate.

This sequence belongs to the shikimate kinase family. Monomer. The cofactor is Mg(2+).

The protein resides in the cytoplasm. The enzyme catalyses shikimate + ATP = 3-phosphoshikimate + ADP + H(+). Its pathway is metabolic intermediate biosynthesis; chorismate biosynthesis; chorismate from D-erythrose 4-phosphate and phosphoenolpyruvate: step 5/7. Its function is as follows. Catalyzes the specific phosphorylation of the 3-hydroxyl group of shikimic acid using ATP as a cosubstrate. The sequence is that of Shikimate kinase from Psychrobacter cryohalolentis (strain ATCC BAA-1226 / DSM 17306 / VKM B-2378 / K5).